A 225-amino-acid polypeptide reads, in one-letter code: UPF0758 protein MADE_1000235 (225 aa).

In terms of domain architecture, MPN spans 102–224 (VFNNVDDTKR…TISFAQRGLL (123 aa)). 3 residues coordinate Zn(2+): His173, His175, and Asp186. Positions 173 to 186 (HNHPSGVAEPSHAD) match the JAMM motif motif.

The protein belongs to the UPF0758 family.

The protein is UPF0758 protein MADE_1000235 of Alteromonas mediterranea (strain DSM 17117 / CIP 110805 / LMG 28347 / Deep ecotype).